The primary structure comprises 492 residues: Bifunctional purine biosynthesis protein PurH (492 aa).

The MGS-like domain maps to 1-144; it reads MKKAILSVSN…KNFKHVITVV (144 aa).

The protein belongs to the PurH family.

The enzyme catalyses (6R)-10-formyltetrahydrofolate + 5-amino-1-(5-phospho-beta-D-ribosyl)imidazole-4-carboxamide = 5-formamido-1-(5-phospho-D-ribosyl)imidazole-4-carboxamide + (6S)-5,6,7,8-tetrahydrofolate. The catalysed reaction is IMP + H2O = 5-formamido-1-(5-phospho-D-ribosyl)imidazole-4-carboxamide. It participates in purine metabolism; IMP biosynthesis via de novo pathway; 5-formamido-1-(5-phospho-D-ribosyl)imidazole-4-carboxamide from 5-amino-1-(5-phospho-D-ribosyl)imidazole-4-carboxamide (10-formyl THF route): step 1/1. The protein operates within purine metabolism; IMP biosynthesis via de novo pathway; IMP from 5-formamido-1-(5-phospho-D-ribosyl)imidazole-4-carboxamide: step 1/1. The polypeptide is Bifunctional purine biosynthesis protein PurH (Staphylococcus saprophyticus subsp. saprophyticus (strain ATCC 15305 / DSM 20229 / NCIMB 8711 / NCTC 7292 / S-41)).